A 269-amino-acid chain; its full sequence is Formamidopyrimidine-DNA glycosylase (269 aa).

Catalysis depends on Pro2, which acts as the Schiff-base intermediate with DNA. Glu3 acts as the Proton donor in catalysis. Lys57 (proton donor; for beta-elimination activity) is an active-site residue. Residues His90, Arg109, and Lys150 each contribute to the DNA site. The FPG-type zinc finger occupies 235-269; it reads QVYGRKGEPCRVCGTPIVATKHAQRATFYCRQCQK. Residue Arg259 is the Proton donor; for delta-elimination activity of the active site.

It belongs to the FPG family. As to quaternary structure, monomer. Zn(2+) serves as cofactor.

The enzyme catalyses Hydrolysis of DNA containing ring-opened 7-methylguanine residues, releasing 2,6-diamino-4-hydroxy-5-(N-methyl)formamidopyrimidine.. It carries out the reaction 2'-deoxyribonucleotide-(2'-deoxyribose 5'-phosphate)-2'-deoxyribonucleotide-DNA = a 3'-end 2'-deoxyribonucleotide-(2,3-dehydro-2,3-deoxyribose 5'-phosphate)-DNA + a 5'-end 5'-phospho-2'-deoxyribonucleoside-DNA + H(+). Involved in base excision repair of DNA damaged by oxidation or by mutagenic agents. Acts as a DNA glycosylase that recognizes and removes damaged bases. Has a preference for oxidized purines, such as 7,8-dihydro-8-oxoguanine (8-oxoG). Has AP (apurinic/apyrimidinic) lyase activity and introduces nicks in the DNA strand. Cleaves the DNA backbone by beta-delta elimination to generate a single-strand break at the site of the removed base with both 3'- and 5'-phosphates. This chain is Formamidopyrimidine-DNA glycosylase, found in Escherichia coli O6:H1 (strain CFT073 / ATCC 700928 / UPEC).